The chain runs to 254 residues: MRIDLNSDLGESYGSWIMGNDEQILPMVSSANIACGFHAGDPLGIFKTLKQAAKLGVTVGAHVSYPDLAGFGRRNMQLSYDELLTDVMYQISALQGLAKAAGTTVKYVKPHGALYNTIATDLQQAQAVLDAIKCLDSDLILVGLAGSPLITFAQQNGLNVVAEAFADRAYNADGSLVSRRLAGAVLHDPDFVAKRVVKMIQEGGVISIDGHFTPISAQSICLHGDTDGALSMAAAIRNALLTEGIEIRSFCEVN.

It belongs to the LamB/PxpA family. In terms of assembly, forms a complex composed of PxpA, PxpB and PxpC.

It carries out the reaction 5-oxo-L-proline + ATP + 2 H2O = L-glutamate + ADP + phosphate + H(+). In terms of biological role, catalyzes the cleavage of 5-oxoproline to form L-glutamate coupled to the hydrolysis of ATP to ADP and inorganic phosphate. This chain is 5-oxoprolinase subunit A, found in Acinetobacter baylyi (strain ATCC 33305 / BD413 / ADP1).